A 473-amino-acid chain; its full sequence is Photosystem II CP43 reaction center protein (473 aa).

The propeptide occupies 1-14 (MKTLYSLRRFYHVE). At Thr-15 the chain carries N-acetylthreonine. Thr-15 is modified (phosphothreonine). A run of 5 helical transmembrane segments spans residues 69-93 (LFEVAHFTPEKPMYEQGLILLPHLA), 134-155 (LIGPETLEESFPFFGYVWKDKN), 178-200 (KACYFGGVYDTWAPGGGDVRIIT), 255-275 (KPWAWARRAFVWSGEAYLSYS), and 291-312 (WFNNTAYPSEFYGPTGPEASQA). A [CaMn4O5] cluster-binding site is contributed by Glu-367. Residues 447 to 471 (RARAAAAGFEKGIERETEPVLFMKP) traverse the membrane as a helical segment.

The protein belongs to the PsbB/PsbC family. PsbC subfamily. As to quaternary structure, PSII is composed of 1 copy each of membrane proteins PsbA, PsbB, PsbC, PsbD, PsbE, PsbF, PsbH, PsbI, PsbJ, PsbK, PsbL, PsbM, PsbT, PsbX, PsbY, PsbZ, Psb30/Ycf12, at least 3 peripheral proteins of the oxygen-evolving complex and a large number of cofactors. It forms dimeric complexes. Requires Binds multiple chlorophylls and provides some of the ligands for the Ca-4Mn-5O cluster of the oxygen-evolving complex. It may also provide a ligand for a Cl- that is required for oxygen evolution. PSII binds additional chlorophylls, carotenoids and specific lipids. as cofactor.

The protein resides in the plastid. Its subcellular location is the chloroplast thylakoid membrane. Its function is as follows. One of the components of the core complex of photosystem II (PSII). It binds chlorophyll and helps catalyze the primary light-induced photochemical processes of PSII. PSII is a light-driven water:plastoquinone oxidoreductase, using light energy to abstract electrons from H(2)O, generating O(2) and a proton gradient subsequently used for ATP formation. The chain is Photosystem II CP43 reaction center protein from Mesostigma viride (Green alga).